A 177-amino-acid chain; its full sequence is Insertion element IS1223 uncharacterized 20.7 kDa protein (177 aa).

The tract at residues 112–131 is disordered; sequence KQKGRPRKVPKKSKKTTKKL. Residues 113–128 show a composition bias toward basic residues; the sequence is QKGRPRKVPKKSKKTT.

Belongs to the IS150/IS1296 orfA family.

The sequence is that of Insertion element IS1223 uncharacterized 20.7 kDa protein from Lactobacillus johnsonii.